A 168-amino-acid chain; its full sequence is MSLACLRSFFLPALLASTAVLVASFHLESVVGLVPCALCFSQRLMLGVYALVCLAALVHSPAARGRRAYAGLALASAFGGALLAGRHVWLQGDPQVVDGCHLPVEQVLQRPLGEILQMFLLGSPDCVSISWSFLDLTLPEWSLLAFLLLAAMPLSWLVAYRFRKRAMA.

Residues 1 to 9 lie on the Cytoplasmic side of the membrane; that stretch reads MSLACLRSF. The chain crosses the membrane as a helical span at residues 10–26; the sequence is FLPALLASTAVLVASFH. At 27-44 the chain is on the periplasmic side; it reads LESVVGLVPCALCFSQRL. Residues Cys-36 and Cys-39 are joined by a disulfide bond. Residues 45-61 traverse the membrane as a helical segment; the sequence is MLGVYALVCLAALVHSP. The Cytoplasmic segment spans residues 62–67; sequence AARGRR. Residues 68 to 85 form a helical membrane-spanning segment; sequence AYAGLALASAFGGALLAG. Residues 86 to 140 are Periplasmic-facing; that stretch reads RHVWLQGDPQVVDGCHLPVEQVLQRPLGEILQMFLLGSPDCVSISWSFLDLTLPE. An intrachain disulfide couples Cys-100 to Cys-126. The chain crosses the membrane as a helical span at residues 141–159; that stretch reads WSLLAFLLLAAMPLSWLVA. Residues 160–168 are Cytoplasmic-facing; it reads YRFRKRAMA.

The protein belongs to the DsbB family.

The protein localises to the cell inner membrane. In terms of biological role, required for disulfide bond formation in some periplasmic proteins. Acts by oxidizing the DsbA protein. In Pseudomonas entomophila (strain L48), this protein is Disulfide bond formation protein B 2.